The primary structure comprises 271 residues: Putative hydro-lyase Mrad2831_3350 (271 aa).

Belongs to the D-glutamate cyclase family.

The sequence is that of Putative hydro-lyase Mrad2831_3350 from Methylobacterium radiotolerans (strain ATCC 27329 / DSM 1819 / JCM 2831 / NBRC 15690 / NCIMB 10815 / 0-1).